The sequence spans 683 residues: Bifunctional lysine-specific demethylase and histidyl-hydroxylase NO66 (683 aa).

A compositionally biased stretch (polar residues) spans 1 to 26 (MHKASTSSANRANFQGNHKTQKSPNN). 2 disordered regions span residues 1–162 (MHKA…SPIQ) and 179–208 (AAGA…AAKS). Residues 54 to 65 (LTKEQKERRKMM) show a composition bias toward basic and acidic residues. Residues 85–94 (IDTSASTSNK) are compositionally biased toward polar residues. Residues 95–108 (GKSKAARPTDRKRR) are compositionally biased toward basic residues. Over residues 116 to 125 (PADANNNNTK) the composition is skewed to low complexity. Serine 152 carries the post-translational modification Phosphoserine. A Phosphothreonine modification is found at threonine 158. A Phosphoserine modification is found at serine 159. The segment covering 179-189 (AAGASGASGPA) has biased composition (low complexity). The region spanning 341-480 (NPSTYLVGLR…NLLEKLMPIV (140 aa)) is the JmjC domain. Fe cation contacts are provided by histidine 381, aspartate 383, and histidine 446.

It belongs to the ROX family. NO66 subfamily. Fe(2+) is required as a cofactor.

Its subcellular location is the nucleus. It carries out the reaction N(6),N(6)-dimethyl-L-lysyl(36)-[histone H3] + 2 2-oxoglutarate + 2 O2 = L-lysyl(36)-[histone H3] + 2 formaldehyde + 2 succinate + 2 CO2. In terms of biological role, oxygenase that can act as both a histone lysine demethylase and a ribosomal histidine hydroxylase. Specifically demethylates 'Lys-4' (H3K4me) and 'Lys-36' (H3K36me) of histone H3, thereby playing a central role in histone code. The polypeptide is Bifunctional lysine-specific demethylase and histidyl-hydroxylase NO66 (Drosophila yakuba (Fruit fly)).